The primary structure comprises 558 residues: WW domain-containing adapter protein with coiled-coil (558 aa).

Disordered stretches follow at residues 1-129 (MVMY…WSEH), 159-244 (QRQK…SPAP), and 321-461 (VAQQ…APGR). Residues 22–32 (QPYQTLKYSSK) show a composition bias toward polar residues. 2 stretches are compositionally biased toward basic and acidic residues: residues 33–46 (SHPD…RDSN) and 56–70 (RRSD…DNTG). Basic residues predominate over residues 72–82 (GRAKAIHPHRG). Low complexity predominate over residues 99-116 (NHSSLHSSNSHSNPNKSS). A WW domain is found at 120-153 (FEPADDWSEHISSSGKKYYYNCRTEVSQWEKPKE). Residues 175–184 (PKDRDYRREA) show a composition bias toward basic and acidic residues. The span at 188–200 (TPASYSSTKSSIA) shows a compositional bias: polar residues. Residues 204–217 (PSSLTPSSSSAAVS) are compositionally biased toward low complexity. Composition is skewed to polar residues over residues 223-234 (NSASSASGSTVP) and 321-378 (VAQQ…MTVK). Residues 402–431 (SPRTLQRQSSQRSPSPGPNHMGSNSSSSSN) are compositionally biased toward low complexity. Gly residues predominate over residues 432 to 443 (NGGGGGGQGPGV). Residues 529–555 (QATLREQRILFLRQQIKELEKLKNQNS) adopt a coiled-coil conformation.

The protein resides in the nucleus. Its function is as follows. Acts as a linker between gene transcription and histone H2B monoubiquitination at 'Lys-120' (H2BK120ub1). Positive regulator of amino acid starvation-induced autophagy. Positively regulates MTOR activity. May negatively regulate the ubiquitin proteasome pathway. This Danio rerio (Zebrafish) protein is WW domain-containing adapter protein with coiled-coil (waca).